The primary structure comprises 749 residues: Homeobox-leucine zipper protein ROC7 (749 aa).

The tract at residues Leu26–His98 is disordered. A compositionally biased stretch (basic and acidic residues) spans Ser46–Met57. Over residues Ser68–Gly78 the composition is skewed to gly residues. Residues Arg86–Gln97 show a composition bias toward basic residues. Residues Arg88–His147 constitute a DNA-binding region (homeobox). The stretch at Gln137–Tyr218 forms a coiled coil. The region spanning Ala256–Ser494 is the START domain.

This sequence belongs to the HD-ZIP homeobox family. Class IV subfamily.

The protein resides in the nucleus. In terms of biological role, probable transcription factor. This chain is Homeobox-leucine zipper protein ROC7 (ROC7), found in Oryza sativa subsp. indica (Rice).